The sequence spans 268 residues: tRNA pseudouridine synthase A (268 aa).

Asp-52 acts as the Nucleophile in catalysis. Substrate is bound at residue Tyr-110.

It belongs to the tRNA pseudouridine synthase TruA family. In terms of assembly, homodimer.

It catalyses the reaction uridine(38/39/40) in tRNA = pseudouridine(38/39/40) in tRNA. Its function is as follows. Formation of pseudouridine at positions 38, 39 and 40 in the anticodon stem and loop of transfer RNAs. The sequence is that of tRNA pseudouridine synthase A from Prochlorococcus marinus (strain MIT 9301).